We begin with the raw amino-acid sequence, 218 residues long: Large ribosomal subunit protein uL3c (218 aa).

Residues 127-161 (GFSRGPMTHGSKNHREPGSTGAGTTPGRIYPGKRM) are disordered.

The protein belongs to the universal ribosomal protein uL3 family. As to quaternary structure, part of the 50S ribosomal subunit.

Its subcellular location is the plastid. It localises to the organellar chromatophore. Functionally, one of the primary rRNA binding proteins, it binds directly near the 3'-end of the 23S rRNA, where it nucleates assembly of the 50S subunit. This chain is Large ribosomal subunit protein uL3c (rpl3), found in Paulinella chromatophora.